Consider the following 340-residue polypeptide: Glycerol-3-phosphate dehydrogenase [NAD(P)+] (340 aa).

4 residues coordinate NADPH: Ser-14, Phe-15, Arg-35, and Lys-108. 2 residues coordinate sn-glycerol 3-phosphate: Lys-108 and Gly-136. Ala-140 is a binding site for NADPH. Residues Lys-191, Asp-244, Ser-254, Arg-255, and Asn-256 each contribute to the sn-glycerol 3-phosphate site. Lys-191 functions as the Proton acceptor in the catalytic mechanism. Residue Arg-255 coordinates NADPH. Glu-281 provides a ligand contact to NADPH.

This sequence belongs to the NAD-dependent glycerol-3-phosphate dehydrogenase family.

The protein resides in the cytoplasm. The enzyme catalyses sn-glycerol 3-phosphate + NAD(+) = dihydroxyacetone phosphate + NADH + H(+). It carries out the reaction sn-glycerol 3-phosphate + NADP(+) = dihydroxyacetone phosphate + NADPH + H(+). It participates in membrane lipid metabolism; glycerophospholipid metabolism. In terms of biological role, catalyzes the reduction of the glycolytic intermediate dihydroxyacetone phosphate (DHAP) to sn-glycerol 3-phosphate (G3P), the key precursor for phospholipid synthesis. In Pseudomonas paraeruginosa (strain DSM 24068 / PA7) (Pseudomonas aeruginosa (strain PA7)), this protein is Glycerol-3-phosphate dehydrogenase [NAD(P)+].